The following is a 148-amino-acid chain: MKKITLIGSELAKTGNEFIYLGHLNECESCRFKRICHNNLDVGARYKIVSVRSANHPCTVHENGVKVVEVAPAEFTILIESKKALEGVTLTHANVLCDKVCCKNYLSCHPEGISGKYKVSSIFSEKIDCQKGHSLKKVSIISLDESNK.

It belongs to the UPF0179 family.

The chain is UPF0179 protein Mevan_0979 from Methanococcus vannielii (strain ATCC 35089 / DSM 1224 / JCM 13029 / OCM 148 / SB).